Reading from the N-terminus, the 1235-residue chain is Topoisomerase 1-associated factor 1 (1235 aa).

4 disordered regions span residues 327-357, 584-610, 812-841, and 897-1235; these read RERKMDNSKTFRPPRRARKPEMEPKDLGPPV, GEEAEDVGVPEDNDADDSGDDEQHAER, EGAADGEAADERSNKSAPPHITIRPDTEAR, and EFSP…SDEE. A compositionally biased stretch (acidic residues) spans 585–603; it reads EEAEDVGVPEDNDADDSGD. Residues 929 to 947 show a composition bias toward acidic residues; that stretch reads DDDEEEIRGFLGDDDDEDF. Residues 964–973 are compositionally biased toward basic residues; that stretch reads QKKRQRKRRR. Residues 977–986 are compositionally biased toward acidic residues; it reads SGDEEDEGVS. Residues 999 to 1044 show a composition bias toward basic and acidic residues; that stretch reads EKELEKIRKIKSEMYVHASDDETDDERDREFFERERKRQETKDSKF. Composition is skewed to acidic residues over residues 1070 to 1081 and 1099 to 1118; these read VLDDEPESDESE and SEEEQEEEEEEEEEEDSDEE. Positions 1124 to 1150 are enriched in basic residues; sequence AKSKTSKRKAAVPSKRPARRPGTAKKR. Residues 1156–1170 show a composition bias toward acidic residues; that stretch reads SDNDEDEDEEEDAMD. The span at 1193-1202 shows a compositional bias: basic and acidic residues; that stretch reads LGRRIDKMAM. Over residues 1203–1212 the composition is skewed to acidic residues; the sequence is DDGDEDEDDQ.

Belongs to the timeless family. In terms of assembly, component of the fork protection complex (FPC) consisting of tof-1 and csm-3.

It localises to the nucleus. In terms of biological role, forms a fork protection complex (FPC) with csm-3 and which is required for chromosome segregation during meiosis and DNA damage repair. FPC coordinates leading and lagging strand synthesis and moves with the replication fork. FPC stabilizes replication forks in a configuration that is recognized by replication checkpoint sensors. In Neurospora crassa (strain ATCC 24698 / 74-OR23-1A / CBS 708.71 / DSM 1257 / FGSC 987), this protein is Topoisomerase 1-associated factor 1 (tof-1).